The chain runs to 324 residues: Glyoxylate/hydroxypyruvate reductase B (324 aa).

Residues Arg-237 and Glu-266 contribute to the active site. His-285 serves as the catalytic Proton donor.

This sequence belongs to the D-isomer specific 2-hydroxyacid dehydrogenase family. GhrB subfamily. As to quaternary structure, homodimer.

The protein resides in the cytoplasm. The catalysed reaction is glycolate + NADP(+) = glyoxylate + NADPH + H(+). It carries out the reaction (R)-glycerate + NAD(+) = 3-hydroxypyruvate + NADH + H(+). The enzyme catalyses (R)-glycerate + NADP(+) = 3-hydroxypyruvate + NADPH + H(+). Catalyzes the NADPH-dependent reduction of glyoxylate and hydroxypyruvate into glycolate and glycerate, respectively. The sequence is that of Glyoxylate/hydroxypyruvate reductase B from Escherichia coli O6:K15:H31 (strain 536 / UPEC).